Consider the following 529-residue polypeptide: MQQRRPVRRALLSVSDKAGIVEFAQALTARGVELLSTGGTARLLADKGLPVTEVSDYTGFPEMMDGRVKTLHPKVHGGILGRRGQDDGIMQQHGIAPIDMVVVNLYPFAQTVAREGCSLEDAVENIDIGGPTMVRSAAKNHKDVAIVVKSSDYDAIINEMDANEGSLTLNTRFDLAIKAFEHTAAYDSMIANYFGSMVPAYHGESQEAAGRFPRTLNLNFIKKQDMRYGENSHQQAAFYIEENVKEASVATATQLQGKALSYNNIADTDAALECVKEFNEPACVIVKHANPCGVAVSNSILDAYDRAYKTDPTSAFGGIIAFNRELDAETAQAIISRQFVEVIIAPSASEEALKITAAKQNVRVLTCGQWDARVAGLDFKRVNGGLLVQDRDLGMVTAGELRVVSKRQPSEQELRDALFCWKVAKFVKSNAIVYAKDNMTIGIGAGQMSRVYSAKIAGIKAGDEGLEVKGSAMASDAFFPFRDGIDAAAAVGITCVIQPGGSIRDDEVIAAADEHGIAMIFTDMRHFRH.

One can recognise an MGS-like domain in the interval 1–148 (MQQRRPVRRA…KNHKDVAIVV (148 aa)).

The protein belongs to the PurH family.

The catalysed reaction is (6R)-10-formyltetrahydrofolate + 5-amino-1-(5-phospho-beta-D-ribosyl)imidazole-4-carboxamide = 5-formamido-1-(5-phospho-D-ribosyl)imidazole-4-carboxamide + (6S)-5,6,7,8-tetrahydrofolate. It carries out the reaction IMP + H2O = 5-formamido-1-(5-phospho-D-ribosyl)imidazole-4-carboxamide. Its pathway is purine metabolism; IMP biosynthesis via de novo pathway; 5-formamido-1-(5-phospho-D-ribosyl)imidazole-4-carboxamide from 5-amino-1-(5-phospho-D-ribosyl)imidazole-4-carboxamide (10-formyl THF route): step 1/1. It participates in purine metabolism; IMP biosynthesis via de novo pathway; IMP from 5-formamido-1-(5-phospho-D-ribosyl)imidazole-4-carboxamide: step 1/1. The polypeptide is Bifunctional purine biosynthesis protein PurH (Klebsiella pneumoniae (strain 342)).